Here is a 189-residue protein sequence, read N- to C-terminus: Ribosomal RNA large subunit methyltransferase E (189 aa).

S-adenosyl-L-methionine contacts are provided by Gly-45, Phe-47, Asp-64, Asp-82, and Asp-104. Catalysis depends on Lys-144, which acts as the Proton acceptor.

This sequence belongs to the class I-like SAM-binding methyltransferase superfamily. RNA methyltransferase RlmE family.

It localises to the cytoplasm. It catalyses the reaction uridine(2552) in 23S rRNA + S-adenosyl-L-methionine = 2'-O-methyluridine(2552) in 23S rRNA + S-adenosyl-L-homocysteine + H(+). In terms of biological role, specifically methylates the uridine in position 2552 of 23S rRNA at the 2'-O position of the ribose in the fully assembled 50S ribosomal subunit. The chain is Ribosomal RNA large subunit methyltransferase E from Borreliella afzelii (strain PKo) (Borrelia afzelii).